The primary structure comprises 119 residues: Large ribosomal subunit protein uL18 (119 aa).

The protein belongs to the universal ribosomal protein uL18 family. In terms of assembly, part of the 50S ribosomal subunit; part of the 5S rRNA/L5/L18/L25 subcomplex. Contacts the 5S and 23S rRNAs.

This is one of the proteins that bind and probably mediate the attachment of the 5S RNA into the large ribosomal subunit, where it forms part of the central protuberance. The protein is Large ribosomal subunit protein uL18 of Xanthomonas oryzae pv. oryzae (strain MAFF 311018).